A 251-amino-acid chain; its full sequence is uncharacterized protein (251 aa).

The RING-type zinc finger occupies 192–238; the sequence is CMMCVQRGDERVAITTPYTTDCGHTYCYACIMSRLKLVNNVSCPICK.

It localises to the cytoplasm. This is an uncharacterized protein from Schizosaccharomyces pombe (strain 972 / ATCC 24843) (Fission yeast).